Reading from the N-terminus, the 469-residue chain is Serine/threonine-protein kinases PknA (469 aa).

A Protein kinase domain is found at 20-281 (YRLQWIIGHG…NEMALAVSAV (262 aa)). ATP-binding positions include 26–34 (IGHGGMSTV) and Lys-49. The active-site Proton acceptor is the Asp-148. Disordered regions lie at residues 286 to 307 (RPPQ…PSES) and 359 to 454 (FNDT…PADD). 2 stretches are compositionally biased toward low complexity: residues 365–384 (ETTT…EETT) and 399–413 (TEPE…TSEE). The segment covering 430–443 (VPQIPTSTPRTSAS) has biased composition (polar residues).

It belongs to the protein kinase superfamily. Ser/Thr protein kinase family.

It catalyses the reaction L-seryl-[protein] + ATP = O-phospho-L-seryl-[protein] + ADP + H(+). The enzyme catalyses L-threonyl-[protein] + ATP = O-phospho-L-threonyl-[protein] + ADP + H(+). This chain is Serine/threonine-protein kinases PknA (pknA), found in Corynebacterium glutamicum (strain ATCC 13032 / DSM 20300 / JCM 1318 / BCRC 11384 / CCUG 27702 / LMG 3730 / NBRC 12168 / NCIMB 10025 / NRRL B-2784 / 534).